We begin with the raw amino-acid sequence, 216 residues long: Probable methylthioribulose-1-phosphate dehydratase (216 aa).

Residue C87 participates in substrate binding. H105 and H107 together coordinate Zn(2+). E129 acts as the Proton donor/acceptor in catalysis.

Belongs to the aldolase class II family. MtnB subfamily. It depends on Zn(2+) as a cofactor.

It is found in the cytoplasm. It carries out the reaction 5-(methylsulfanyl)-D-ribulose 1-phosphate = 5-methylsulfanyl-2,3-dioxopentyl phosphate + H2O. The protein operates within amino-acid biosynthesis; L-methionine biosynthesis via salvage pathway; L-methionine from S-methyl-5-thio-alpha-D-ribose 1-phosphate: step 2/6. Functionally, catalyzes the dehydration of methylthioribulose-1-phosphate (MTRu-1-P) into 2,3-diketo-5-methylthiopentyl-1-phosphate (DK-MTP-1-P). In Drosophila persimilis (Fruit fly), this protein is Probable methylthioribulose-1-phosphate dehydratase.